The chain runs to 434 residues: MSIITDVYAREVLDSRGNPTLEVEVYTESGAFGRGMVPSGASTGEHEAVELRDGDKARYGGLGTQKAVDNVNNVIAEHIIGFDVRDQQGIDRAMIALDGTPNKGKLGANAILGVSIAVARAAADYLEVPLYSYLGGFNTKVLPTPMMNIINGGSHSDAPIAFQEFMIVPAGAPTFKEALRWGAEIFHALKKILKERGLETAVGDEGGFAPRFNGTEDGVETIIKAIEAAGYVPGKDVFIGLDCASSEFYDAERKVYDYTKFEGEGAAVRTAAEQIDYLEELVNKYPIITIEDGMDENDWDGWKALTERLGGKVQLVGDDFFVTNTAYLEKGIAEHAANSILIKVNQIGTLTETFDAIEMAKEAGYTAVVSHRSGETEDSTIADIAVATNAGQIKTGSLSRTDRIAKYNQLLRIEDQLGEVAEYRGLKSFYNLKK.

A (2R)-2-phosphoglycerate-binding site is contributed by Gln163. Glu205 serves as the catalytic Proton donor. Positions 242, 291, and 318 each coordinate Mg(2+). (2R)-2-phosphoglycerate-binding residues include Lys343, Arg372, Ser373, and Lys394. The Proton acceptor role is filled by Lys343.

The protein belongs to the enolase family. Requires Mg(2+) as cofactor.

It is found in the cytoplasm. The protein resides in the secreted. Its subcellular location is the cell surface. It catalyses the reaction (2R)-2-phosphoglycerate = phosphoenolpyruvate + H2O. Its pathway is carbohydrate degradation; glycolysis; pyruvate from D-glyceraldehyde 3-phosphate: step 4/5. Its function is as follows. Catalyzes the reversible conversion of 2-phosphoglycerate (2-PG) into phosphoenolpyruvate (PEP). It is essential for the degradation of carbohydrates via glycolysis. The polypeptide is Enolase (Streptococcus thermophilus (strain ATCC BAA-491 / LMD-9)).